Here is a 344-residue protein sequence, read N- to C-terminus: Photosystem II protein D1 (344 aa).

Thr2 carries the post-translational modification N-acetylthreonine. Thr2 carries the phosphothreonine modification. 3 consecutive transmembrane segments (helical) span residues Tyr29–Ser46, His118–Leu133, and Trp142–Ala156. Chlorophyll a is bound at residue His118. A pheophytin a-binding site is contributed by Tyr126. 2 residues coordinate [CaMn4O5] cluster: Asp170 and Glu189. A helical membrane pass occupies residues Phe197–Leu218. His198 contributes to the chlorophyll a binding site. Residues His215 and Ser264 to Phe265 each bind a quinone. Fe cation is bound at residue His215. Residue His272 participates in Fe cation binding. Residues Phe274–Leu288 form a helical membrane-spanning segment. Positions 332, 333, 342, and 344 each coordinate [CaMn4O5] cluster.

This sequence belongs to the reaction center PufL/M/PsbA/D family. PSII is composed of 1 copy each of membrane proteins PsbA, PsbB, PsbC, PsbD, PsbE, PsbF, PsbH, PsbI, PsbJ, PsbK, PsbL, PsbM, PsbT, PsbX, PsbY, PsbZ, Psb30/Ycf12, at least 3 peripheral proteins of the oxygen-evolving complex and a large number of cofactors. It forms dimeric complexes. The cofactor is The D1/D2 heterodimer binds P680, chlorophylls that are the primary electron donor of PSII, and subsequent electron acceptors. It shares a non-heme iron and each subunit binds pheophytin, quinone, additional chlorophylls, carotenoids and lipids. D1 provides most of the ligands for the Mn4-Ca-O5 cluster of the oxygen-evolving complex (OEC). There is also a Cl(-1) ion associated with D1 and D2, which is required for oxygen evolution. The PSII complex binds additional chlorophylls, carotenoids and specific lipids.. In terms of processing, tyr-161 forms a radical intermediate that is referred to as redox-active TyrZ, YZ or Y-Z.

The protein localises to the plastid. It is found in the chloroplast thylakoid membrane. The enzyme catalyses 2 a plastoquinone + 4 hnu + 2 H2O = 2 a plastoquinol + O2. In terms of biological role, photosystem II (PSII) is a light-driven water:plastoquinone oxidoreductase that uses light energy to abstract electrons from H(2)O, generating O(2) and a proton gradient subsequently used for ATP formation. It consists of a core antenna complex that captures photons, and an electron transfer chain that converts photonic excitation into a charge separation. The D1/D2 (PsbA/PsbD) reaction center heterodimer binds P680, the primary electron donor of PSII as well as several subsequent electron acceptors. The polypeptide is Photosystem II protein D1 (Staurastrum punctulatum (Green alga)).